Consider the following 466-residue polypeptide: UDP-glycosyltransferase 79 (466 aa).

Histidine 27 acts as the Proton acceptor in catalysis. Histidine 27 lines the UDP-alpha-D-glucose pocket. Aspartate 120 (charge relay) is an active-site residue. 11 residues coordinate UDP-alpha-D-glucose: serine 142, threonine 291, phenylalanine 343, cysteine 344, histidine 361, tryptophan 364, asparagine 365, serine 366, glutamate 369, aspartate 385, and glutamine 386. UDP contacts are provided by threonine 291, phenylalanine 343, cysteine 344, and histidine 361. UDP is bound by residues asparagine 365, serine 366, and glutamate 369.

This sequence belongs to the UDP-glycosyltransferase family.

Functionally, involved in the detoxification of the Fusarium mycotoxin deoxynivalenol by the transfer of glucose from UDP-D-glucose to the hydroxyl group at C-3, forming deoxynivalenol-3-O-beta-D-glucoside. In Oryza sativa subsp. japonica (Rice), this protein is UDP-glycosyltransferase 79.